Consider the following 359-residue polypeptide: 3-dehydroquinate synthase (359 aa).

Residues 71–76 (DGEAYK), 105–109 (GVIGD), 129–130 (TT), lysine 142, and lysine 151 each bind NAD(+). The Zn(2+) site is built by glutamate 184, histidine 247, and histidine 264.

The protein belongs to the sugar phosphate cyclases superfamily. Dehydroquinate synthase family. Co(2+) serves as cofactor. Zn(2+) is required as a cofactor. The cofactor is NAD(+).

It localises to the cytoplasm. It carries out the reaction 7-phospho-2-dehydro-3-deoxy-D-arabino-heptonate = 3-dehydroquinate + phosphate. It functions in the pathway metabolic intermediate biosynthesis; chorismate biosynthesis; chorismate from D-erythrose 4-phosphate and phosphoenolpyruvate: step 2/7. Catalyzes the conversion of 3-deoxy-D-arabino-heptulosonate 7-phosphate (DAHP) to dehydroquinate (DHQ). The protein is 3-dehydroquinate synthase of Burkholderia vietnamiensis (strain G4 / LMG 22486) (Burkholderia cepacia (strain R1808)).